The chain runs to 237 residues: Purine nucleoside phosphorylase DeoD-type (237 aa).

Histidine 4 contributes to the a purine D-ribonucleoside binding site. Phosphate contacts are provided by residues glycine 20, arginine 24, arginine 43, and 87-90; that span reads RVGT. A purine D-ribonucleoside is bound by residues 179–181 and 203–204; these read EME and SD. The active-site Proton donor is aspartate 204.

Belongs to the PNP/UDP phosphorylase family. In terms of assembly, homohexamer; trimer of homodimers.

The catalysed reaction is a purine D-ribonucleoside + phosphate = a purine nucleobase + alpha-D-ribose 1-phosphate. The enzyme catalyses a purine 2'-deoxy-D-ribonucleoside + phosphate = a purine nucleobase + 2-deoxy-alpha-D-ribose 1-phosphate. Its function is as follows. Catalyzes the reversible phosphorolytic breakdown of the N-glycosidic bond in the beta-(deoxy)ribonucleoside molecules, with the formation of the corresponding free purine bases and pentose-1-phosphate. The sequence is that of Purine nucleoside phosphorylase DeoD-type from Clostridium beijerinckii (strain ATCC 51743 / NCIMB 8052) (Clostridium acetobutylicum).